The chain runs to 382 residues: S-adenosylmethionine decarboxylase proenzyme (382 aa).

Position 32 (Phe-32) interacts with substrate. Residues Glu-33 and Glu-36 contribute to the active site. Leu-87 is a binding site for substrate. The Schiff-base intermediate with substrate; via pyruvic acid role is filled by Ser-90. A Pyruvic acid (Ser); by autocatalysis modification is found at Ser-90. Cys-104 functions as the Proton donor; for catalytic activity in the catalytic mechanism. Residue Phe-248 participates in substrate binding. Residues Ser-254 and His-267 each act as proton acceptor; for processing activity in the active site. Glu-271 contributes to the substrate binding site.

This sequence belongs to the eukaryotic AdoMetDC family. In terms of assembly, heterotetramer of two alpha and two beta chains. Pyruvate is required as a cofactor. Is synthesized initially as an inactive proenzyme. Formation of the active enzyme involves a self-maturation process in which the active site pyruvoyl group is generated from an internal serine residue via an autocatalytic post-translational modification. Two non-identical subunits are generated from the proenzyme in this reaction, and the pyruvate is formed at the N-terminus of the alpha chain, which is derived from the carboxyl end of the proenzyme. The post-translation cleavage follows an unusual pathway, termed non-hydrolytic serinolysis, in which the side chain hydroxyl group of the serine supplies its oxygen atom to form the C-terminus of the beta chain, while the remainder of the serine residue undergoes an oxidative deamination to produce ammonia and the pyruvoyl group blocking the N-terminus of the alpha chain.

The enzyme catalyses S-adenosyl-L-methionine + H(+) = S-adenosyl 3-(methylsulfanyl)propylamine + CO2. Its pathway is amine and polyamine biosynthesis; S-adenosylmethioninamine biosynthesis; S-adenosylmethioninamine from S-adenosyl-L-methionine: step 1/1. In Leishmania donovani, this protein is S-adenosylmethionine decarboxylase proenzyme.